We begin with the raw amino-acid sequence, 383 residues long: Acetylornithine deacetylase (383 aa).

Residue H80 coordinates Zn(2+). Residue D82 is part of the active site. D112 provides a ligand contact to Zn(2+). The active site involves E144. Positions 145, 169, and 355 each coordinate Zn(2+).

The protein belongs to the peptidase M20A family. ArgE subfamily. As to quaternary structure, homodimer. Zn(2+) is required as a cofactor. The cofactor is Co(2+). Glutathione serves as cofactor.

The protein resides in the cytoplasm. It catalyses the reaction N(2)-acetyl-L-ornithine + H2O = L-ornithine + acetate. Its pathway is amino-acid biosynthesis; L-arginine biosynthesis; L-ornithine from N(2)-acetyl-L-ornithine (linear): step 1/1. In terms of biological role, catalyzes the hydrolysis of the amide bond of N(2)-acetylated L-amino acids. Cleaves the acetyl group from N-acetyl-L-ornithine to form L-ornithine, an intermediate in L-arginine biosynthesis pathway, and a branchpoint in the synthesis of polyamines. The sequence is that of Acetylornithine deacetylase from Salmonella heidelberg (strain SL476).